Consider the following 406-residue polypeptide: Ribose-phosphate pyrophosphokinase 3, mitochondrial (406 aa).

Positions 1–32 (MAATPHRHLLQPCKNPAISSSETLKPSSSFSL) are disordered. A mitochondrion-targeting transit peptide spans 1–87 (MAATPHRHLL…RRFQMSSNQE (87 aa)). A compositionally biased stretch (low complexity) spans 18–32 (ISSSETLKPSSSFSL). Mg(2+) contacts are provided by Asp226 and His228. The interval 309 to 324 (GRHVVIVDDLVQSGGT) is binding of phosphoribosylpyrophosphate.

Belongs to the ribose-phosphate pyrophosphokinase family.

It is found in the mitochondrion. The catalysed reaction is D-ribose 5-phosphate + ATP = 5-phospho-alpha-D-ribose 1-diphosphate + AMP + H(+). This Spinacia oleracea (Spinach) protein is Ribose-phosphate pyrophosphokinase 3, mitochondrial (PRS3).